The following is a 194-amino-acid chain: ATP-dependent Clp protease proteolytic subunit 1 (194 aa).

Residue serine 99 is the Nucleophile of the active site. Residue histidine 124 is part of the active site.

This sequence belongs to the peptidase S14 family. Fourteen ClpP subunits assemble into 2 heptameric rings which stack back to back to give a disk-like structure with a central cavity, resembling the structure of eukaryotic proteasomes.

The protein localises to the cytoplasm. The enzyme catalyses Hydrolysis of proteins to small peptides in the presence of ATP and magnesium. alpha-casein is the usual test substrate. In the absence of ATP, only oligopeptides shorter than five residues are hydrolyzed (such as succinyl-Leu-Tyr-|-NHMec, and Leu-Tyr-Leu-|-Tyr-Trp, in which cleavage of the -Tyr-|-Leu- and -Tyr-|-Trp bonds also occurs).. In terms of biological role, cleaves peptides in various proteins in a process that requires ATP hydrolysis. Has a chymotrypsin-like activity. Plays a major role in the degradation of misfolded proteins. This is ATP-dependent Clp protease proteolytic subunit 1 from Borreliella burgdorferi (strain ATCC 35210 / DSM 4680 / CIP 102532 / B31) (Borrelia burgdorferi).